The following is a 143-amino-acid chain: Aspartate 1-decarboxylase (143 aa).

The active-site Schiff-base intermediate with substrate; via pyruvic acid is the Ser-25. Ser-25 is modified (pyruvic acid (Ser)). A substrate-binding site is contributed by Thr-57. Catalysis depends on Tyr-58, which acts as the Proton donor. 73 to 75 (GAA) contacts substrate.

It belongs to the PanD family. As to quaternary structure, heterooctamer of four alpha and four beta subunits. Pyruvate is required as a cofactor. In terms of processing, is synthesized initially as an inactive proenzyme, which is activated by self-cleavage at a specific serine bond to produce a beta-subunit with a hydroxyl group at its C-terminus and an alpha-subunit with a pyruvoyl group at its N-terminus.

The protein localises to the cytoplasm. The enzyme catalyses L-aspartate + H(+) = beta-alanine + CO2. Its pathway is cofactor biosynthesis; (R)-pantothenate biosynthesis; beta-alanine from L-aspartate: step 1/1. Its function is as follows. Catalyzes the pyruvoyl-dependent decarboxylation of aspartate to produce beta-alanine. This chain is Aspartate 1-decarboxylase, found in Mycobacterium ulcerans (strain Agy99).